A 430-amino-acid polypeptide reads, in one-letter code: Enolase (430 aa).

Q168 is a binding site for (2R)-2-phosphoglycerate. Residue E210 is the Proton donor of the active site. Mg(2+) is bound by residues D247, E288, and D315. (2R)-2-phosphoglycerate-binding residues include K340, R369, S370, and K391. The active-site Proton acceptor is the K340.

This sequence belongs to the enolase family. Requires Mg(2+) as cofactor.

The protein resides in the cytoplasm. It localises to the secreted. It is found in the cell surface. It catalyses the reaction (2R)-2-phosphoglycerate = phosphoenolpyruvate + H2O. It functions in the pathway carbohydrate degradation; glycolysis; pyruvate from D-glyceraldehyde 3-phosphate: step 4/5. Catalyzes the reversible conversion of 2-phosphoglycerate (2-PG) into phosphoenolpyruvate (PEP). It is essential for the degradation of carbohydrates via glycolysis. This is Enolase from Picosynechococcus sp. (strain ATCC 27264 / PCC 7002 / PR-6) (Agmenellum quadruplicatum).